Consider the following 249-residue polypeptide: Adenylate kinase (249 aa).

43-48 (GAGKGT) is an ATP binding site. An NMP region spans residues 63-92 (ATGDMLRAQVAAKSALGVEAKKIMDQGGLV). AMP is bound by residues T64, R69, 90-92 (GLV), 119-122 (GFPR), and Q126. The interval 160-197 (GRLVHPASGRSYHKLFNPPKKDMIDDVSGDALVQRSDD) is LID. Residues R161 and 170 to 171 (SY) each bind ATP. The AMP site is built by R194 and R205. Residue Q233 participates in ATP binding.

Belongs to the adenylate kinase family. AK2 subfamily. Monomer.

It is found in the cytoplasm. It localises to the cytosol. Its subcellular location is the mitochondrion intermembrane space. The enzyme catalyses AMP + ATP = 2 ADP. In terms of biological role, catalyzes the reversible transfer of the terminal phosphate group between ATP and AMP. Plays an important role in cellular energy homeostasis and in adenine nucleotide metabolism. Adenylate kinase activity is critical for regulation of the phosphate utilization and the AMP de novo biosynthesis pathways. In Debaryomyces hansenii (strain ATCC 36239 / CBS 767 / BCRC 21394 / JCM 1990 / NBRC 0083 / IGC 2968) (Yeast), this protein is Adenylate kinase.